Consider the following 275-residue polypeptide: S-methyl-5'-thioadenosine phosphorylase (275 aa).

Residues S20, 62–63, and 95–96 contribute to the phosphate site; these read RH and SA. Cystine bridges form between C143-C210, C205-C266, and C264-C267. Substrate is bound at residue M195. Residue T196 participates in phosphate binding. 219-221 provides a ligand contact to substrate; that stretch reads DYD.

The protein belongs to the PNP/MTAP phosphorylase family. MTAP subfamily. In terms of assembly, homohexamer. Dimer of a homotrimer.

It carries out the reaction S-methyl-5'-thioadenosine + phosphate = 5-(methylsulfanyl)-alpha-D-ribose 1-phosphate + adenine. Its pathway is amino-acid biosynthesis; L-methionine biosynthesis via salvage pathway; S-methyl-5-thio-alpha-D-ribose 1-phosphate from S-methyl-5'-thioadenosine (phosphorylase route): step 1/1. In terms of biological role, catalyzes the reversible phosphorylation of S-methyl-5'-thioadenosine (MTA) to adenine and 5-methylthioribose-1-phosphate. Involved in the breakdown of MTA, a major by-product of polyamine biosynthesis. Responsible for the first step in the methionine salvage pathway after MTA has been generated from S-adenosylmethionine. Has broad substrate specificity with 6-aminopurine nucleosides as preferred substrates. The polypeptide is S-methyl-5'-thioadenosine phosphorylase (Aeropyrum pernix (strain ATCC 700893 / DSM 11879 / JCM 9820 / NBRC 100138 / K1)).